The sequence spans 316 residues: Small neutral protease regulatory protein (316 aa).

Residues 1-56 form the HTH lysR-type domain; it reads MRHLRALCAIADTGSVRRAARELGVSQPALTTQLRRIEQSLGAELFHRGRDGCRPT. A DNA-binding region (H-T-H motif) is located at residues 16 to 35; sequence VRRAARELGVSQPALTTQLR.

The protein belongs to the LysR transcriptional regulatory family.

Functionally, transcriptional trans-activator of the gene (mprA) for the small neutral protease. In Streptomyces coelicolor, this protein is Small neutral protease regulatory protein (mprR).